We begin with the raw amino-acid sequence, 132 residues long: Mercuric resistance operon regulatory protein (132 aa).

Residues 2–71 (KFRIGELADK…LNEIDKLLGV (70 aa)) form the HTH merR-type domain. A DNA-binding region (H-T-H motif) is located at residues 5-24 (IGELADKCGVNKETIRYYER). Positions 79, 114, and 123 each coordinate Hg(2+).

As to quaternary structure, homodimer.

Mediates the mercuric-dependent induction of mercury resistance operon. In the absence of mercury MerR represses transcription by binding tightly to the mer operator region; when mercury is present the dimeric complex binds a single ion and becomes a potent transcriptional activator, while remaining bound to the mer site. In Bacillus cereus, this protein is Mercuric resistance operon regulatory protein (merR1).